The primary structure comprises 172 residues: MDNPRRIIIGIDPGSRITGYGIIWSQGSKQGCIAFGQIKTDNDSLNFRLHQIERELRDLILIHRPHEAAIEQVFTFHNHQSALKLGQARGAALVATAACALPVAEYSARQIKQAVVGYGAATKAQVQHMVHLLLQLEKAPPADAADALAIALCHATSSRLSEKLMQAKGTLT.

Active-site residues include aspartate 12, glutamate 71, and aspartate 143. Aspartate 12, glutamate 71, and aspartate 143 together coordinate Mg(2+).

This sequence belongs to the RuvC family. In terms of assembly, homodimer which binds Holliday junction (HJ) DNA. The HJ becomes 2-fold symmetrical on binding to RuvC with unstacked arms; it has a different conformation from HJ DNA in complex with RuvA. In the full resolvosome a probable DNA-RuvA(4)-RuvB(12)-RuvC(2) complex forms which resolves the HJ. Requires Mg(2+) as cofactor.

The protein localises to the cytoplasm. It carries out the reaction Endonucleolytic cleavage at a junction such as a reciprocal single-stranded crossover between two homologous DNA duplexes (Holliday junction).. Its function is as follows. The RuvA-RuvB-RuvC complex processes Holliday junction (HJ) DNA during genetic recombination and DNA repair. Endonuclease that resolves HJ intermediates. Cleaves cruciform DNA by making single-stranded nicks across the HJ at symmetrical positions within the homologous arms, yielding a 5'-phosphate and a 3'-hydroxyl group; requires a central core of homology in the junction. The consensus cleavage sequence is 5'-(A/T)TT(C/G)-3'. Cleavage occurs on the 3'-side of the TT dinucleotide at the point of strand exchange. HJ branch migration catalyzed by RuvA-RuvB allows RuvC to scan DNA until it finds its consensus sequence, where it cleaves and resolves the cruciform DNA. The sequence is that of Crossover junction endodeoxyribonuclease RuvC from Coxiella burnetii (strain CbuK_Q154) (Coxiella burnetii (strain Q154)).